The sequence spans 103 residues: Small ribosomal subunit protein uS10 (103 aa).

Belongs to the universal ribosomal protein uS10 family. Part of the 30S ribosomal subunit.

Involved in the binding of tRNA to the ribosomes. This chain is Small ribosomal subunit protein uS10, found in Neisseria gonorrhoeae (strain NCCP11945).